The following is a 118-amino-acid chain: Small ribosomal subunit protein uS13 (118 aa).

Residues 94-118 (SLPLRGQRTKTNARTRKGPRKPIKK) are disordered.

This sequence belongs to the universal ribosomal protein uS13 family. In terms of assembly, part of the 30S ribosomal subunit. Forms a loose heterodimer with protein S19. Forms two bridges to the 50S subunit in the 70S ribosome.

Its function is as follows. Located at the top of the head of the 30S subunit, it contacts several helices of the 16S rRNA. In the 70S ribosome it contacts the 23S rRNA (bridge B1a) and protein L5 of the 50S subunit (bridge B1b), connecting the 2 subunits; these bridges are implicated in subunit movement. Contacts the tRNAs in the A and P-sites. This chain is Small ribosomal subunit protein uS13, found in Aliivibrio fischeri (strain ATCC 700601 / ES114) (Vibrio fischeri).